A 48-amino-acid chain; its full sequence is Palustrin-3a (48 aa).

A disulfide bond links C43 and C48.

Expressed by the skin glands.

It is found in the secreted. Antimicrobial activity against Gram-negative bacterium E.coli. This is Palustrin-3a from Lithobates palustris (Pickerel frog).